Here is a 401-residue protein sequence, read N- to C-terminus: Phosphoglycerate kinase (401 aa).

Substrate is bound by residues 26–28 (DLN), R41, 64–67 (HLGR), R123, and R156. Residues K207, G298, E329, and 355 to 358 (GGDS) each bind ATP.

Belongs to the phosphoglycerate kinase family. As to quaternary structure, monomer.

It is found in the cytoplasm. It carries out the reaction (2R)-3-phosphoglycerate + ATP = (2R)-3-phospho-glyceroyl phosphate + ADP. It participates in carbohydrate degradation; glycolysis; pyruvate from D-glyceraldehyde 3-phosphate: step 2/5. The polypeptide is Phosphoglycerate kinase (Bdellovibrio bacteriovorus (strain ATCC 15356 / DSM 50701 / NCIMB 9529 / HD100)).